A 262-amino-acid chain; its full sequence is Hydroxyethylthiazole kinase (262 aa).

M50 is a binding site for substrate. ATP contacts are provided by R125 and T171. G198 is a substrate binding site.

The protein belongs to the Thz kinase family. It depends on Mg(2+) as a cofactor.

It catalyses the reaction 5-(2-hydroxyethyl)-4-methylthiazole + ATP = 4-methyl-5-(2-phosphooxyethyl)-thiazole + ADP + H(+). The protein operates within cofactor biosynthesis; thiamine diphosphate biosynthesis; 4-methyl-5-(2-phosphoethyl)-thiazole from 5-(2-hydroxyethyl)-4-methylthiazole: step 1/1. In terms of biological role, catalyzes the phosphorylation of the hydroxyl group of 4-methyl-5-beta-hydroxyethylthiazole (THZ). This Escherichia coli (strain 55989 / EAEC) protein is Hydroxyethylthiazole kinase.